The following is a 1071-amino-acid chain: DNA-directed RNA polymerase subunit beta (1071 aa).

The protein belongs to the RNA polymerase beta chain family. In terms of assembly, in plastids the minimal PEP RNA polymerase catalytic core is composed of four subunits: alpha, beta, beta', and beta''. When a (nuclear-encoded) sigma factor is associated with the core the holoenzyme is formed, which can initiate transcription.

The protein localises to the plastid. Its subcellular location is the chloroplast. The enzyme catalyses RNA(n) + a ribonucleoside 5'-triphosphate = RNA(n+1) + diphosphate. Its function is as follows. DNA-dependent RNA polymerase catalyzes the transcription of DNA into RNA using the four ribonucleoside triphosphates as substrates. This is DNA-directed RNA polymerase subunit beta from Panax ginseng (Korean ginseng).